An 857-amino-acid polypeptide reads, in one-letter code: Envelope glycoprotein B (857 aa).

The signal sequence occupies residues 1 to 21 (MTRRRVLSVVVLLAALACRLG). Topologically, residues 22–732 (AQTPEQPAPP…SGFISFFKNP (711 aa)) are virion surface. Cystine bridges form between cysteine 51/cysteine 528, cysteine 68/cysteine 484, cysteine 141/cysteine 206, cysteine 295/cysteine 342, and cysteine 551/cysteine 588. Asparagine 76 carries N-linked (GlcNAc...) asparagine; by host glycosylation. The segment at 108 to 114 (IYNGWYA) is involved in fusion and/or binding to host membrane. N-linked (GlcNAc...) asparagine; by host glycosylation occurs at asparagine 163. The interval 192–200 (GWLIWTYRT) is involved in fusion and/or binding to host membrane. 4 N-linked (GlcNAc...) asparagine; by host glycosylation sites follow: asparagine 290, asparagine 329, asparagine 348, and asparagine 395. A disordered region spans residues 398–453 (ELTTPTSSPPSSPSPPAPSAARGSTPAAVLRRRRRDAGNATTPVPPTAPGKSLGTL). The span at 404 to 415 (SSPPSSPSPPAP) shows a compositional bias: pro residues. Residues 416–425 (SAARGSTPAA) show a composition bias toward low complexity. N-linked (GlcNAc...) asparagine; by host glycosylation is found at asparagine 436, asparagine 563, and asparagine 629. Positions 561-620 (FINDTKTYEGQLGTDNEIFLTKKMTEVCQATSQYYFQSGNEIHVYNDYHHFKTIELDGIA) are oligomerization. 2 hydrophobic membrane proximal region regions span residues 678 to 730 (LDNA…SFFK) and 709 to 729 (NLVSTVGGLFSSLVSGFISFF). A helical transmembrane segment spans residues 733 to 753 (FGGMLILVLVAGVVILVISLT). Over 754-857 (RRTRQMSQQP…ALLGEAETEF (104 aa)) the chain is Intravirion. Positions 832–857 (FPGLRRRRYHDPETAAALLGEAETEF) are disordered. Low complexity predominate over residues 845 to 857 (TAAALLGEAETEF).

The protein belongs to the herpesviridae glycoprotein B family. As to quaternary structure, homotrimer; disulfide-linked. Binds to heparan sulfate proteoglycans. Interacts with gH/gL heterodimer. Post-translationally, a proteolytic cleavage by host furin generates two subunits that remain linked by disulfide bonds.

The protein resides in the virion membrane. Its subcellular location is the host cell membrane. The protein localises to the host endosome membrane. It localises to the host Golgi apparatus membrane. Envelope glycoprotein that forms spikes at the surface of virion envelope. Essential for the initial attachment to heparan sulfate moieties of the host cell surface proteoglycans. Involved in fusion of viral and cellular membranes leading to virus entry into the host cell. Following initial binding to its host receptors, membrane fusion is mediated by the fusion machinery composed at least of gB and the heterodimer gH/gL. May be involved in the fusion between the virion envelope and the outer nuclear membrane during virion egress. The protein is Envelope glycoprotein B of Epstein-Barr virus (strain B95-8) (HHV-4).